Here is a 483-residue protein sequence, read N- to C-terminus: MQKLSLVWIITLSVSVITGDGLSILSCNKTDEVPTVTQCFKSCSDTILGEQVKVSILSQEDPTSIVVGRCIWRIMKQSFTETWTFSRLISAKEITWEPATTQECNGAFHNLCKNKAGCVSEDLEIEPEFSWARTEIREVKHLSIETLTMSAYLHQGAGKVLIDGVAVPISKKTHNNGDFTYVWDDVPISEVCPWKHPISHLSCYKDKEDLDDIYCPSQGISLVNYTKVDTSCPEQIYTDVGGLVFKLGKVDFNDWYPYVIESSDVAVKETISSINMALKMRESVHCHQDCLEIRRRVTYVDGFYYDPLPPAKCRLIGNCSVDSGSVTCNNGTLVWATCGGRRVWIDLKSGRDVKNAVCEKGGRSRISKNQFEGVLNEFHLNNSKFGNILRANEIHSVILKDNEVMDFARVVKSASERSGNFSEGTLINVRQLFRPMINFLRGIEHEIKVVAFSVLALIVGYIIIRIRTVTVAKAKSLESIAMI.

The first 21 residues, 1 to 21 (MQKLSLVWIITLSVSVITGDG), serve as a signal peptide directing secretion. Residues 22–442 (LSILSCNKTD…FRPMINFLRG (421 aa)) lie on the Virion surface side of the membrane. A helical transmembrane segment spans residues 443–463 (IEHEIKVVAFSVLALIVGYII). At 464-483 (IRIRTVTVAKAKSLESIAMI) the chain is on the intravirion side.

This sequence belongs to the cytorhabdovirus glycoprotein family. In terms of assembly, homotrimer. Interacts with matrix protein. Glycosylatedby host. Glycosylation is crucial for glycoprotein export at the cell surface.

The protein resides in the virion membrane. In terms of biological role, attaches the virus to host cellular receptor, inducing endocytosis of the virion. In the endosome, the acidic pH induces conformational changes in the glycoprotein trimer, which trigger fusion between virus and cell membrane. This Hordeum vulgare (Barley) protein is Glycoprotein (G).